Consider the following 408-residue polypeptide: LL-diaminopimelate aminotransferase (408 aa).

Residues tyrosine 15 and glycine 42 each coordinate substrate. Pyridoxal 5'-phosphate is bound by residues tyrosine 72, 108–109, tyrosine 132, asparagine 187, tyrosine 218, and 246–248; these read SK and SFS. The substrate site is built by lysine 109, tyrosine 132, and asparagine 187. Residue lysine 249 is modified to N6-(pyridoxal phosphate)lysine. Residues arginine 257 and asparagine 292 each coordinate pyridoxal 5'-phosphate. 2 residues coordinate substrate: asparagine 292 and arginine 388.

This sequence belongs to the class-I pyridoxal-phosphate-dependent aminotransferase family. LL-diaminopimelate aminotransferase subfamily. In terms of assembly, homodimer. The cofactor is pyridoxal 5'-phosphate.

It carries out the reaction (2S,6S)-2,6-diaminopimelate + 2-oxoglutarate = (S)-2,3,4,5-tetrahydrodipicolinate + L-glutamate + H2O + H(+). Its pathway is amino-acid biosynthesis; L-lysine biosynthesis via DAP pathway; LL-2,6-diaminopimelate from (S)-tetrahydrodipicolinate (aminotransferase route): step 1/1. Involved in the synthesis of meso-diaminopimelate (m-DAP or DL-DAP), required for both lysine and peptidoglycan biosynthesis. Catalyzes the direct conversion of tetrahydrodipicolinate to LL-diaminopimelate. This Synechococcus sp. (strain RCC307) protein is LL-diaminopimelate aminotransferase.